The chain runs to 504 residues: ATP synthase subunit beta (504 aa).

The interval 1 to 23 (MAKAATPKETAAAKKPAAPKKAA) is disordered. 182 to 189 (GGAGVGKT) contacts ATP.

The protein belongs to the ATPase alpha/beta chains family. In terms of assembly, F-type ATPases have 2 components, CF(1) - the catalytic core - and CF(0) - the membrane proton channel. CF(1) has five subunits: alpha(3), beta(3), gamma(1), delta(1), epsilon(1). CF(0) has three main subunits: a(1), b(2) and c(9-12). The alpha and beta chains form an alternating ring which encloses part of the gamma chain. CF(1) is attached to CF(0) by a central stalk formed by the gamma and epsilon chains, while a peripheral stalk is formed by the delta and b chains.

The protein localises to the cell inner membrane. The catalysed reaction is ATP + H2O + 4 H(+)(in) = ADP + phosphate + 5 H(+)(out). Its function is as follows. Produces ATP from ADP in the presence of a proton gradient across the membrane. The catalytic sites are hosted primarily by the beta subunits. The polypeptide is ATP synthase subunit beta (Rhizobium meliloti (strain 1021) (Ensifer meliloti)).